Consider the following 146-residue polypeptide: Hemoglobin subunit delta (146 aa).

Positions 2–146 constitute a Globin domain; the sequence is HLTGDEKSAV…VATALAHKYH (145 aa). Phosphoserine is present on Ser-50. Heme b contacts are provided by His-63 and His-92.

The protein belongs to the globin family. Heterotetramer of two delta chains and two alpha chains. In terms of tissue distribution, red blood cells.

The sequence is that of Hemoglobin subunit delta (HBD) from Saimiri sciureus (Common squirrel monkey).